Here is a 434-residue protein sequence, read N- to C-terminus: Methylenetetrahydrofolate--tRNA-(uracil-5-)-methyltransferase TrmFO (434 aa).

10 to 15 serves as a coordination point for FAD; that stretch reads GAGLAG.

This sequence belongs to the MnmG family. TrmFO subfamily. FAD is required as a cofactor.

The protein localises to the cytoplasm. It catalyses the reaction uridine(54) in tRNA + (6R)-5,10-methylene-5,6,7,8-tetrahydrofolate + NADH + H(+) = 5-methyluridine(54) in tRNA + (6S)-5,6,7,8-tetrahydrofolate + NAD(+). It carries out the reaction uridine(54) in tRNA + (6R)-5,10-methylene-5,6,7,8-tetrahydrofolate + NADPH + H(+) = 5-methyluridine(54) in tRNA + (6S)-5,6,7,8-tetrahydrofolate + NADP(+). In terms of biological role, catalyzes the folate-dependent formation of 5-methyl-uridine at position 54 (M-5-U54) in all tRNAs. The chain is Methylenetetrahydrofolate--tRNA-(uracil-5-)-methyltransferase TrmFO from Bacillus cereus (strain G9842).